A 315-amino-acid chain; its full sequence is Glycine--tRNA ligase alpha subunit (315 aa).

This sequence belongs to the class-II aminoacyl-tRNA synthetase family. In terms of assembly, tetramer of two alpha and two beta subunits.

Its subcellular location is the cytoplasm. It catalyses the reaction tRNA(Gly) + glycine + ATP = glycyl-tRNA(Gly) + AMP + diphosphate. This Ectopseudomonas mendocina (strain ymp) (Pseudomonas mendocina) protein is Glycine--tRNA ligase alpha subunit.